The chain runs to 310 residues: Proline iminopeptidase (310 aa).

Residues 33 to 290 enclose the AB hydrolase-1 domain; that stretch reads PVIFLHGGPG…RVVQAGHCAF (258 aa). Serine 107 functions as the Nucleophile in the catalytic mechanism. Aspartate 260 is an active-site residue. Histidine 287 (proton donor) is an active-site residue.

The protein belongs to the peptidase S33 family.

The protein resides in the cytoplasm. It catalyses the reaction Release of N-terminal proline from a peptide.. Hydrolyzes peptides having the structure Pro-Y-Z to yield free proline. Also hydrolyzes the dipeptide Pro-Gly. This is Proline iminopeptidase (pip) from Neisseria gonorrhoeae.